The primary structure comprises 101 residues: Toxin Tpa8 (101 aa).

Residues 1-20 (MVKSEMKLVIFSLFLLLIGV) form the signal peptide. The LCN-type CS-alpha/beta domain occupies 24–98 (KNGYPVIEGG…VMDRTKEYCE (75 aa)). 4 disulfides stabilise this stretch: C44/C70, C56/C75, C60/C77, and C71/C97.

It belongs to the long (4 C-C) scorpion toxin superfamily. Sodium channel inhibitor family. Beta subfamily. Expressed by the venom gland.

The protein resides in the secreted. Functionally, excitatory insect beta-toxins induce a spastic paralysis. They bind voltage-independently at site-4 of sodium channels (Nav) and shift the voltage of activation toward more negative potentials thereby affecting sodium channel activation and promoting spontaneous and repetitive firing. This chain is Toxin Tpa8, found in Tityus pachyurus (Colombian scorpion).